Reading from the N-terminus, the 381-residue chain is Alkanesulfonate monooxygenase (381 aa).

Belongs to the SsuD family. Homotetramer.

The catalysed reaction is an alkanesulfonate + FMNH2 + O2 = an aldehyde + FMN + sulfite + H2O + 2 H(+). Functionally, catalyzes the desulfonation of aliphatic sulfonates. The chain is Alkanesulfonate monooxygenase from Escherichia coli O7:K1 (strain IAI39 / ExPEC).